Reading from the N-terminus, the 988-residue chain is UPF0182 protein MAB_3498c (988 aa).

Transmembrane regions (helical) follow at residues 19-39 (LVAA…LVDT), 63-83 (LALF…GFGL), 114-134 (LFLI…AQSY), 176-196 (FIAA…FGGI), 211-231 (IQLI…YWLD), 260-280 (KLIL…ALVL), and 288-308 (IGLA…PLIV).

Belongs to the UPF0182 family.

Its subcellular location is the cell membrane. The polypeptide is UPF0182 protein MAB_3498c (Mycobacteroides abscessus (strain ATCC 19977 / DSM 44196 / CCUG 20993 / CIP 104536 / JCM 13569 / NCTC 13031 / TMC 1543 / L948) (Mycobacterium abscessus)).